A 259-amino-acid polypeptide reads, in one-letter code: NAD(P)H-quinone oxidoreductase subunit K 2 (259 aa).

Residues Cys52, Cys53, Cys117, and Cys148 each coordinate [4Fe-4S] cluster.

The protein belongs to the complex I 20 kDa subunit family. In terms of assembly, NDH-1 can be composed of about 15 different subunits; different subcomplexes with different compositions have been identified which probably have different functions. It depends on [4Fe-4S] cluster as a cofactor.

It localises to the cellular thylakoid membrane. It catalyses the reaction a plastoquinone + NADH + (n+1) H(+)(in) = a plastoquinol + NAD(+) + n H(+)(out). The catalysed reaction is a plastoquinone + NADPH + (n+1) H(+)(in) = a plastoquinol + NADP(+) + n H(+)(out). NDH-1 shuttles electrons from an unknown electron donor, via FMN and iron-sulfur (Fe-S) centers, to quinones in the respiratory and/or the photosynthetic chain. The immediate electron acceptor for the enzyme in this species is believed to be plastoquinone. Couples the redox reaction to proton translocation, and thus conserves the redox energy in a proton gradient. Cyanobacterial NDH-1 also plays a role in inorganic carbon-concentration. This chain is NAD(P)H-quinone oxidoreductase subunit K 2 (ndhK2), found in Cyanothece sp. (strain PCC 7425 / ATCC 29141).